A 503-amino-acid chain; its full sequence is Probable cytosol aminopeptidase (503 aa).

Positions 274 and 279 each coordinate Mn(2+). The active site involves K286. Mn(2+)-binding residues include D297, D356, and E358. The active site involves R360.

This sequence belongs to the peptidase M17 family. The cofactor is Mn(2+).

The protein resides in the cytoplasm. The enzyme catalyses Release of an N-terminal amino acid, Xaa-|-Yaa-, in which Xaa is preferably Leu, but may be other amino acids including Pro although not Arg or Lys, and Yaa may be Pro. Amino acid amides and methyl esters are also readily hydrolyzed, but rates on arylamides are exceedingly low.. The catalysed reaction is Release of an N-terminal amino acid, preferentially leucine, but not glutamic or aspartic acids.. Its function is as follows. Presumably involved in the processing and regular turnover of intracellular proteins. Catalyzes the removal of unsubstituted N-terminal amino acids from various peptides. The sequence is that of Probable cytosol aminopeptidase from Burkholderia cenocepacia (strain ATCC BAA-245 / DSM 16553 / LMG 16656 / NCTC 13227 / J2315 / CF5610) (Burkholderia cepacia (strain J2315)).